We begin with the raw amino-acid sequence, 436 residues long: Phaseolin, alpha-type (436 aa).

Positions 1–24 (MMRARVPLLLLGILFLASLSASFA) are cleaved as a signal peptide. Residues 233-257 (LSKHAKSSSRKSHSKQDNTIGNEFG) are disordered. Positions 236–245 (HAKSSSRKSH) are enriched in basic residues. Residues 245–396 (HSKQDNTIGN…TFSGSGEEVM (152 aa)) enclose the Cupin type-1 domain. Asn258 carries an N-linked (GlcNAc...) (complex) asparagine; alternate glycan. Asn258 carries an N-linked (GlcNAc...) (high mannose) asparagine; alternate glycan. An N-linked (GlcNAc...) (high mannose) asparagine glycan is attached at Asn347. Positions 411-436 (HHHQQEQQKGSHQQEQQKGRKGAFVY) are disordered. Over residues 417–426 (QQKGSHQQEQ) the composition is skewed to low complexity.

The protein belongs to the 7S seed storage protein family. As to quaternary structure, homotrimer. N-glycosylated; glycans consist in Man9(GlcNAc)2 and Man7(GlcNAc)2 when dually glycosylated at Asn-258 and Asn-347, whereas it consists in Xyl-Man3(GlcNAc)2 when solely glycosylated at Asn-258.

The protein resides in the vacuole. The protein localises to the aleurone grain. Major seed storage protein. This Phaseolus vulgaris (Kidney bean) protein is Phaseolin, alpha-type.